The sequence spans 438 residues: 3-phosphoshikimate 1-carboxyvinyltransferase (438 aa).

3-phosphoshikimate-binding residues include K26, S27, and R31. Position 26 (K26) interacts with phosphoenolpyruvate. Phosphoenolpyruvate-binding residues include G99 and R127. S170, S171, Q172, S199, E314, and H343 together coordinate 3-phosphoshikimate. Q172 serves as a coordination point for phosphoenolpyruvate. The active-site Proton acceptor is E314. R347, R388, and K413 together coordinate phosphoenolpyruvate.

It belongs to the EPSP synthase family. Monomer.

The protein localises to the cytoplasm. The catalysed reaction is 3-phosphoshikimate + phosphoenolpyruvate = 5-O-(1-carboxyvinyl)-3-phosphoshikimate + phosphate. It functions in the pathway metabolic intermediate biosynthesis; chorismate biosynthesis; chorismate from D-erythrose 4-phosphate and phosphoenolpyruvate: step 6/7. In terms of biological role, catalyzes the transfer of the enolpyruvyl moiety of phosphoenolpyruvate (PEP) to the 5-hydroxyl of shikimate-3-phosphate (S3P) to produce enolpyruvyl shikimate-3-phosphate and inorganic phosphate. The protein is 3-phosphoshikimate 1-carboxyvinyltransferase of Mycobacterium sp. (strain MCS).